Consider the following 68-residue polypeptide: ATP synthase F(0) complex subunit 8 (68 aa).

Residues Thr8–Phe24 form a helical membrane-spanning segment. An N6-acetyllysine; alternate modification is found at Lys54. The residue at position 54 (Lys54) is an N6-succinyllysine; alternate. N6-acetyllysine is present on Lys57.

The protein belongs to the ATPase protein 8 family. In terms of assembly, component of the ATP synthase complex composed at least of ATP5F1A/subunit alpha, ATP5F1B/subunit beta, ATP5MC1/subunit c (homooctomer), MT-ATP6/subunit a, MT-ATP8/subunit 8, ATP5ME/subunit e, ATP5MF/subunit f, ATP5MG/subunit g, ATP5MK/subunit k, ATP5MJ/subunit j, ATP5F1C/subunit gamma, ATP5F1D/subunit delta, ATP5F1E/subunit epsilon, ATP5PF/subunit F6, ATP5PB/subunit b, ATP5PD/subunit d, ATP5PO/subunit OSCP. ATP synthase complex consists of a soluble F(1) head domain (subunits alpha(3) and beta(3)) - the catalytic core - and a membrane F(0) domain - the membrane proton channel (subunits c, a, 8, e, f, g, k and j). These two domains are linked by a central stalk (subunits gamma, delta, and epsilon) rotating inside the F1 region and a stationary peripheral stalk (subunits F6, b, d, and OSCP). Interacts with PRICKLE3.

It is found in the mitochondrion membrane. In terms of biological role, subunit 8, of the mitochondrial membrane ATP synthase complex (F(1)F(0) ATP synthase or Complex V) that produces ATP from ADP in the presence of a proton gradient across the membrane which is generated by electron transport complexes of the respiratory chain. ATP synthase complex consist of a soluble F(1) head domain - the catalytic core - and a membrane F(1) domain - the membrane proton channel. These two domains are linked by a central stalk rotating inside the F(1) region and a stationary peripheral stalk. During catalysis, ATP synthesis in the catalytic domain of F(1) is coupled via a rotary mechanism of the central stalk subunits to proton translocation. In vivo, can only synthesize ATP although its ATP hydrolase activity can be activated artificially in vitro. Part of the complex F(0) domain. In Lemur catta (Ring-tailed lemur), this protein is ATP synthase F(0) complex subunit 8.